A 230-amino-acid chain; its full sequence is Response regulator MprA (230 aa).

The 115-residue stretch at 4–118 folds into the Response regulatory domain; that stretch reads RILVVDDDRA…ELLARMRALL (115 aa). 4-aspartylphosphate is present on D48. The segment at residues 129–227 is a DNA-binding region (ompR/PhoB-type); the sequence is SMAMRFSDLT…VRGVGYVLRE (99 aa).

In terms of processing, phosphorylated and dephosphorylated by MprB.

It localises to the cytoplasm. Functionally, member of the two-component regulatory system MprB/MprA which contributes to maintaining a balance among several systems involved in stress resistance and is required for establishment and maintenance of persistent infection in the host. Functions as a transcriptional regulator that recognizes a 19-bp nucleotide motif comprizing two loosely conserved 8-bp direct DNA-binding motif repeats separated by a 3-bp spacer region. In Mycobacterium tuberculosis (strain ATCC 25177 / H37Ra), this protein is Response regulator MprA (mprA).